Here is a 257-residue protein sequence, read N- to C-terminus: Sad1-interacting factor 1 (257 aa).

The tract at residues 16 to 68 (LNKIKQGGASRINQILGQNSDDSQSDVRATASEEAVHSETATPVTPMSSGFME) is disordered. Composition is skewed to polar residues over residues 26–37 (RINQILGQNSDD) and 54–63 (ETATPVTPMS). Position 35 is a phosphoserine (Ser-35). Phosphoserine is present on Ser-132. At Thr-134 the chain carries Phosphothreonine. Transmembrane regions (helical) follow at residues 160 to 180 (LLAISIVVIVCYFKHLPLLPW) and 231 to 251 (FTQLITDACMTIFALGLCCYF).

As to quaternary structure, interacts with kms1 and sad1.

It localises to the membrane. The sequence is that of Sad1-interacting factor 1 (sif1) from Schizosaccharomyces pombe (strain 972 / ATCC 24843) (Fission yeast).